Consider the following 474-residue polypeptide: Cbb3-type cytochrome c oxidase subunit CcoN1 (474 aa).

At 1-16 (MNTATSTAYSYKVVRQ) the chain is on the cytoplasmic side. Residues 17–37 (FAIMTVVWGIVGMGLGVFIAA) form a helical membrane-spanning segment. The Periplasmic portion of the chain corresponds to 38-60 (QLAWPFLNFDLPWTSFGRLRPLH). H60 provides a ligand contact to heme b. Residues 61–81 (TNAVIFAFGGCALFATSYYSV) traverse the membrane as a helical segment. Residues 82-96 (QRTCQTTLFAPKLAA) lie on the Cytoplasmic side of the membrane. A helical membrane pass occupies residues 97-117 (FTFWGWQLVILLAAISLPLGF). Residues 118 to 129 (TSSKEYAELEWP) lie on the Periplasmic side of the membrane. The chain crosses the membrane as a helical span at residues 130 to 150 (IDILITIVWVAYAVVFFGTLA). At 151-156 (KRKVKH) the chain is on the cytoplasmic side. The chain crosses the membrane as a helical span at residues 157–177 (IYVGNWFFGAFILTVAILHVV). Residues 178–205 (NNLEIPVTAMKSYSLYAGATDAMVQWWY) lie on the Periplasmic side of the membrane. Residues 206–226 (GHNAVGFFLTAGFLGIMYYFV) form a helical membrane-spanning segment. Residue H207 coordinates Cu cation. Residues 227–238 (PKQAERPVYSYR) lie on the Cytoplasmic side of the membrane. The helical transmembrane segment at 239–259 (LSIVHFWALITVYIWAGPHHL) threads the bilayer. Cu cation is bound by residues H257 and H258. The Periplasmic portion of the chain corresponds to 260-270 (HYTALPDWAQS). Residues 271-291 (LGMVMSLILLAPSWGGMINGM) traverse the membrane as a helical segment. The Cytoplasmic portion of the chain corresponds to 292–308 (MTLSGAWHKLRSDPILR). A helical transmembrane segment spans residues 309–329 (FLVVSLAFYGMSTFEGPMMAI). The Periplasmic portion of the chain corresponds to 330 to 345 (KTVNALSHYTDWTIGH). Residues H345 and H347 each contribute to the heme b site. Residues 346 to 366 (VHAGALGWVAMVSIGALYHLV) form a helical membrane-spanning segment. Residues 367–384 (PKVFGREQMHSIGLINTH) are Cytoplasmic-facing. Residues 385 to 405 (FWLATIGTVLYIASMWVNGIA) form a helical membrane-spanning segment. Residues 406–432 (QGLMWRAINDDGTLTYSFVESLEASHP) lie on the Periplasmic side of the membrane. A helical transmembrane segment spans residues 433–453 (GFVVRMIGGAIFFAGMLVMAY). The Cytoplasmic segment spans residues 454 to 474 (NTWRTVQAAKPAEYDAAAQIA).

Belongs to the heme-copper respiratory oxidase family. Component of the cbb3-type cytochrome c oxidase at least composed of CcoN, CcoO, CcoQ and CcoP. Cu(2+) serves as cofactor. Requires heme b as cofactor.

The protein localises to the cell inner membrane. The catalysed reaction is 4 Fe(II)-[cytochrome c] + O2 + 8 H(+)(in) = 4 Fe(III)-[cytochrome c] + 2 H2O + 4 H(+)(out). Its pathway is energy metabolism; oxidative phosphorylation. Its function is as follows. Cbb3-type cytochrome c oxidase is the component of the respiratory chain that catalyzes the reduction of oxygen to water. Subunits CcoN and CcoO form the functional core of the enzyme complex. Subunits CcoP and CcoQ may optionally bind to the core. CcoN is the catalytic subunit of the enzyme. Electrons originating in cytochrome c or a quinol are transferred to the bimetallic center formed by a high-spin heme and copper B. The complex also functions as a proton pump. This Stutzerimonas stutzeri (Pseudomonas stutzeri) protein is Cbb3-type cytochrome c oxidase subunit CcoN1.